The following is a 109-amino-acid chain: Hainantoxin-XVIII-7 (109 aa).

An N-terminal signal peptide occupies residues 1-18 (MKLSIIIIATSLVIAVVA). Positions 19-46 (FPSKDSKAIENDKTEQRMEIVVQETARA) are excised as a propeptide. 4 cysteine pairs are disulfide-bonded: cysteine 47/cysteine 62, cysteine 55/cysteine 68, cysteine 59/cysteine 108, and cysteine 61/cysteine 81.

Belongs to the neurotoxin 25 family. F7 subfamily. In terms of tissue distribution, expressed by the venom gland.

It localises to the secreted. In terms of biological role, putative ion channel inhibitor. This chain is Hainantoxin-XVIII-7, found in Cyriopagopus hainanus (Chinese bird spider).